A 229-amino-acid chain; its full sequence is Platelet-activating factor acetylhydrolase IB subunit alpha2 (229 aa).

An N-acetylserine modification is found at Ser-2. Position 2 is a phosphoserine (Ser-2). Ser-48 is an active-site residue. Ser-64 carries the post-translational modification Phosphoserine. Active-site residues include Asp-193 and His-196. Thr-220 carries the phosphothreonine modification.

The protein belongs to the 'GDSL' lipolytic enzyme family. Platelet-activating factor acetylhydrolase IB beta/gamma subunits subfamily. In terms of assembly, forms a catalytic dimer which is either homodimer (alpha2/alpha2 homodimer) or heterodimer with PAFAH1B3 (alpha2/alpha1 heterodimer). Component of the cytosolic (PAF-AH (I)) heterotetrameric enzyme, which is composed of PAFAH1B1 (beta), PAFAH1B2 (alpha2) and PAFAH1B3 (alpha1) subunits. The catalytic activity of the enzyme resides in the alpha1 (PAFAH1B3) and alpha2 (PAFAH1B2) subunits, whereas the beta subunit (PAFAH1B1) has regulatory activity. Trimer formation is not essential for the catalytic activity. Interacts (homodimer form) with PAFAH1B1 (homodimer form); PAFAH1B2 competes with NDEL1 for PAFAH1B1 binding. Interacts with VLDLR; this interaction may modulate the Reelin pathway.

The protein localises to the cytoplasm. It catalyses the reaction a 1-O-alkyl-2-acetyl-sn-glycero-3-phosphocholine + H2O = a 1-O-alkyl-sn-glycero-3-phosphocholine + acetate + H(+). The catalysed reaction is 1-O-hexadecyl-2-acetyl-sn-glycero-3-phosphocholine + H2O = 1-O-hexadecyl-sn-glycero-3-phosphocholine + acetate + H(+). It carries out the reaction 1-O-hexadecyl-2-acetyl-sn-glycero-3-phosphate + H2O = 1-O-hexadecyl-sn-glycero-3-phosphate + acetate + H(+). The enzyme catalyses 1-O-hexadecyl-2-acetyl-sn-glycero-3-phosphoethanolamine + H2O = 1-O-hexadecyl-sn-glycero-3-phosphoethanolamine + acetate + H(+). With respect to regulation, beta subunit (PAFAH1B1) stimulates the acetylhydrolase activity of the alpha2/alpha2 catalytic homodimer. Functionally, alpha2 catalytic subunit of the cytosolic type I platelet-activating factor (PAF) acetylhydrolase (PAF-AH (I)) heterotetrameric enzyme that catalyzes the hydrolyze of the acetyl group at the sn-2 position of PAF and its analogs and modulates the action of PAF. The activity and substrate specificity of PAF-AH (I) are affected by its subunit composition. The alpha2/alpha2 homodimer (PAFAH1B2/PAFAH1B2 homodimer) hydrolyzes PAF and 1-O-alkyl-2-acetyl-sn-glycero-3-phosphorylethanolamine (AAGPE) more efficiently than 1-O-alkyl-2-acetyl-sn-glycero-3-phosphoric acid (AAGPA). In contrast, the alpha1/alpha2 heterodimer(PAFAH1B3/PAFAH1B3 heterodimer) hydrolyzes AAGPA more efficiently than PAF, but has little hydrolytic activity towards AAGPE. May play a role in male germ cell meiosis during the late pachytenestage and meiotic divisions as well as early spermiogenesis. This Mus musculus (Mouse) protein is Platelet-activating factor acetylhydrolase IB subunit alpha2.